The sequence spans 243 residues: 2-O-methyltransferase NoeI (243 aa).

It belongs to the FkbM methyltransferase family.

Its subcellular location is the cytoplasm. Its function is as follows. Required for 2-O-methylation of the fucosyl group of Nod factors. This Sinorhizobium fredii (strain NBRC 101917 / NGR234) protein is 2-O-methyltransferase NoeI (noeI).